Consider the following 197-residue polypeptide: tRNA(Phe) 7-((3-amino-3-carboxypropyl)-4-demethylwyosine(37)-N(4))-methyltransferase (197 aa).

It belongs to the TYW3 family.

The catalysed reaction is 4-demethyl-7-[(3S)-3-amino-3-carboxypropyl]wyosine(37) in tRNA(Phe) + S-adenosyl-L-methionine = 7-[(3S)-3-amino-3-carboxypropyl]wyosine(37) in tRNA(Phe) + S-adenosyl-L-homocysteine + H(+). S-adenosyl-L-methionine-dependent methyltransferase that acts as a component of the wyosine derivatives biosynthesis pathway. Probably methylates N-4 position of wybutosine-86 to produce wybutosine-72. The protein is tRNA(Phe) 7-((3-amino-3-carboxypropyl)-4-demethylwyosine(37)-N(4))-methyltransferase of Thermococcus sibiricus (strain DSM 12597 / MM 739).